Reading from the N-terminus, the 334-residue chain is Nucleoid-associated protein YPN_2714 (334 aa).

This sequence belongs to the YejK family.

It is found in the cytoplasm. The protein localises to the nucleoid. The chain is Nucleoid-associated protein YPN_2714 from Yersinia pestis bv. Antiqua (strain Nepal516).